We begin with the raw amino-acid sequence, 1091 residues long: Protein diaphanous (1091 aa).

Residues 1-37 are disordered; it reads MSRHEKTKSTGGGLLDSLFGRPSKSKGGTISSGTLAH. The segment at 1-56 is basic region; it reads MSRHEKTKSTGGGLLDSLFGRPSKSKGGTISSGTLAHGGRPVSADNYVVPGVEDFE. The segment covering 25–34 has biased composition (low complexity); sequence SKGGTISSGT. One can recognise a GBD/FH3 domain in the interval 59–431; that stretch reads IQQLSVAELD…QIVFHKGYCD (373 aa). Positions 455–496 form a coiled coil; that stretch reads KAKESKRSEEYEKKIEQLESAKQEAEAKAAHLEEKVKLMEAN. Disordered regions lie at residues 499–589, 994–1021, and 1039–1072; these read AAPS…MMMG, RLQE…DMDA, and GSAF…RTRV. Pro residues predominate over residues 512–572; it reads PMPPPPPGGG…MGGPPPPPMP (61 aa). An FH1 domain is found at 512-596; the sequence is PMPPPPPGGG…MMGPMVPVLP (85 aa). Residues 601–1001 enclose the FH2 domain; sequence PKKKWDVKNP…KRRLQEAREQ (401 aa). The segment covering 994-1010 has biased composition (basic and acidic residues); the sequence is RLQEAREQSAREQQERQ. A DAD domain is found at 1022 to 1054; that stretch reads PQTQEGVMDSLLEALQTGSAFGQRNRQARRQRP.

It belongs to the formin homology family. Diaphanous subfamily. May interact (via CBD/FH3 domain) with Rho1.

Its subcellular location is the cytoplasm. The protein resides in the cytoskeleton. The protein localises to the cleavage furrow. It is found in the apical cell membrane. Functionally, required for cytokinesis in both mitosis and meiosis. Has a role in actin cytoskeleton organization and is essential for many, if not all, actin-mediated events involving membrane invagination. May serve as a mediator between signaling molecules and actin organizers at specific phases of the cell cycle. Possible component of the contractile ring or may control its function. This is Protein diaphanous (dia) from Drosophila melanogaster (Fruit fly).